Reading from the N-terminus, the 295-residue chain is sn-glycerol-3-phosphate transport system permease protein UgpA (295 aa).

Residues 1-11 (MSSFRPVFRSR) lie on the Cytoplasmic side of the membrane. A helical transmembrane segment spans residues 12-32 (WLPYLLVAPQLVITVIFFIWP). Residues 33 to 80 (AGEALWYSLQSVDPFGFSSQFVGLENFVALFHDSYYLDAFWTTIKFSA) lie on the Periplasmic side of the membrane. The region spanning 76–284 (IKFSALVTFS…FLVIILTVVQ (209 aa)) is the ABC transmembrane type-1 domain. The helical transmembrane segment at 81–101 (LVTFSGLLVSLFFAALVDYVV) threads the bilayer. The Cytoplasmic segment spans residues 102–109 (RGSRFYQT). The helical transmembrane segment at 110-130 (LMLLPYAVAPAVAAVLWIFLF) threads the bilayer. At 131–157 (NPGRGLITHFLGEFGYDWNHAQNSGQA) the chain is on the periplasmic side. A helical membrane pass occupies residues 158-178 (MFLVVFASVWKQISYNFLFFF). Residues 179-207 (AALQSIPRSLVEAAAIDGAGPIRRFFRLS) lie on the Cytoplasmic side of the membrane. The helical transmembrane segment at 208 to 228 (LPLIAPVSFFLLVVNLVYAFF) threads the bilayer. At 229 to 262 (DTFPVIDAATAGGPVQATTTLIYKIYREGFTGLD) the chain is on the periplasmic side. The chain crosses the membrane as a helical span at residues 263–283 (LSASAAQSVVLMFLVIILTVV). The Cytoplasmic segment spans residues 284–295 (QFRYVESKVRYQ).

Belongs to the binding-protein-dependent transport system permease family. UgpAE subfamily. In terms of assembly, the complex is composed of two ATP-binding proteins (UgpC), two transmembrane proteins (UgpA and UgpE) and a solute-binding protein (UgpB).

The protein localises to the cell inner membrane. Part of the ABC transporter complex UgpBAEC involved in sn-glycerol-3-phosphate (G3P) import. Probably responsible for the translocation of the substrate across the membrane. This is sn-glycerol-3-phosphate transport system permease protein UgpA (ugpA) from Salmonella choleraesuis (strain SC-B67).